The primary structure comprises 751 residues: ABC transporter G family member 22 (751 aa).

Residues alanine 26–arginine 81 form a disordered region. The region spanning leucine 157–isoleucine 403 is the ABC transporter domain. An ATP-binding site is contributed by glycine 197–threonine 204. The 210-residue stretch at glutamate 498 to tyrosine 707 folds into the ABC transmembrane type-2 domain. Helical transmembrane passes span phenylalanine 516 to tryptophan 536, leucine 552 to phenylalanine 572, leucine 602 to leucine 622, leucine 634 to leucine 654, valine 666 to isoleucine 686, and glycine 722 to leucine 742.

Belongs to the ABC transporter superfamily. ABCG family. Eye pigment precursor importer (TC 3.A.1.204) subfamily.

It is found in the membrane. This chain is ABC transporter G family member 22 (ABCG22), found in Arabidopsis thaliana (Mouse-ear cress).